We begin with the raw amino-acid sequence, 162 residues long: Lectin BRA-3 (162 aa).

Positions 1-24 (MQRSEIVQAVTLLVVVFAITTAEC) are cleaved as a signal peptide. The C-type lectin domain occupies 25–152 (TCPGNLDWQE…NKNKNFLCKM (128 aa)). 3 disulfide bridges follow: cysteine 26-cysteine 39, cysteine 56-cysteine 150, and cysteine 125-cysteine 142.

In terms of assembly, homotetramer; disulfide-linked. As to expression, coelemic fluid.

Functionally, sugar-binding protein which recognizes specific carbohydrate structures and agglutinates a variety of animal cells by binding to cell-surface glycoproteins and glycolipids. Calcium-dependent lectin. Invertebrate lectins may be involved in defense functions. In Megabalanus rosa (Acorn barnacle), this protein is Lectin BRA-3.